The sequence spans 346 residues: Protein STAR1 (346 aa).

The tract at residues 23–48 (QRPPPNGTVHACSKSRPPQLEPGKVG) is disordered. The ABC transporter domain occupies 112–344 (IRVRGLTRRS…KHPMARRFLE (233 aa)). Position 146 to 153 (146 to 153 (GPSGSGKS)) interacts with ATP.

This sequence belongs to the ABC transporter superfamily. ABCI family. Interacts with STAR2. Expressed in roots.

The protein localises to the membrane. In terms of biological role, associates with STAR2 to form a functional transmembrane ABC transporter required for detoxification of aluminum (Al) in roots. Can specifically transport UDP-glucose. The chain is Protein STAR1 from Oryza sativa subsp. japonica (Rice).